A 476-amino-acid chain; its full sequence is MAPAGVSLRATILCLLAWAGLAAGDRVYIHPFHLVIHNESTCEQLAKANAGKPKDPTFIPAPIQAKTSPVDEKALQDQLVLVAAKLDTEDKLRAAMVGMLANFLGFRIYGMHSELWGVVHGATVLSPTAVFGTLASLYLGALDHTADRLQAILGVPWKDKNCTSRLDAHKVLSALQAVQGLLVAQGRADSQAQLLLSTVVGVFTAPGLHLKQPFVQGLALYTPVVLPRSLDFTELDVAAEKIDRFMQAVTGWKTGCSLMGASVDSTLAFNTYVHFQGKMKGFSLLAEPQEFWVDNSTSVSVPMLSGMGTFQHWSDIQDNFSVTQVPFTESACLLLIQPHYASDLDKVEGLTFQQNSLNWMKKLSPRTIHLTMPQLVLQGSYDLQDLLAQAELPAILHTELNLQKLSNDRIRVGEVLNSIFFELEADEREPTESTQQLNKPEVLEVTLNRPFLFAVYDQSATALHFLGRVANPLSTA.

The N-terminal stretch at 1–24 is a signal peptide; sequence MAPAGVSLRATILCLLAWAGLAAG. Asp-25 carries the post-translational modification Beta-decarboxylated aspartate; in form angiotensin-A. Residues Asn-38, Asn-161, Asn-295, and Asn-319 are each glycosylated (N-linked (GlcNAc...) asparagine). A disulfide bridge links Cys-42 with Cys-162.

This sequence belongs to the serpin family. In terms of assembly, during pregnancy, exists as a disulfide-linked 2:2 heterotetramer with the proform of PRG2 and as a complex (probably a 2:2:2 heterohexamer) with pro-PRG2 and C3dg. Post-translationally, beta-decarboxylation of Asp-25 in angiotensin-2, by mononuclear leukocytes produces alanine. The resulting peptide form, angiotensin-A, has the same affinity for the AT1 receptor as angiotensin-2, but a higher affinity for the AT2 receptor. In terms of processing, in response to low blood pressure, the enzyme renin/REN cleaves angiotensinogen to produce angiotensin-1. Angiotensin-1 is a substrate of ACE (angiotensin converting enzyme) that removes a dipeptide to yield the physiologically active peptide angiotensin-2. Angiotensin-1 and angiotensin-2 can be further processed to generate angiotensin-3, angiotensin-4. Angiotensin 1-9 is cleaved from angiotensin-1 by ACE2 and can be further processed by ACE to produce angiotensin 1-7, angiotensin 1-5 and angiotensin 1-4. Angiotensin 1-7 has also been proposed to be cleaved from angiotensin-2 by ACE2 or from angiotensin-1 by MME (neprilysin). The disulfide bond is labile. Angiotensinogen is present in the circulation in a near 40:60 ratio with the oxidized disulfide-bonded form, which preferentially interacts with receptor-bound renin. In terms of tissue distribution, expressed by the liver and secreted in plasma.

The protein localises to the secreted. In terms of biological role, essential component of the renin-angiotensin system (RAS), a potent regulator of blood pressure, body fluid and electrolyte homeostasis. Acts directly on vascular smooth muscle as a potent vasoconstrictor, affects cardiac contractility and heart rate through its action on the sympathetic nervous system, and alters renal sodium and water absorption through its ability to stimulate the zona glomerulosa cells of the adrenal cortex to synthesize and secrete aldosterone. Acts by binding to angiotensin receptors AGTR1 and AGTR2. Also binds the DEAR/FBXW7-AS1 receptor. Its function is as follows. Stimulates aldosterone release. Functionally, is a ligand for the G-protein coupled receptor MAS1. Has vasodilator and antidiuretic effects. Has an antithrombotic effect that involves MAS1-mediated release of nitric oxide from platelets. The polypeptide is Angiotensinogen (Homo sapiens (Human)).